A 1025-amino-acid chain; its full sequence is Exportin-T (1025 aa).

This sequence belongs to the exportin family.

Its subcellular location is the nucleus. The protein localises to the cytoplasm. TRNA nucleus export receptor which facilitates tRNA translocation across the nuclear pore complex. Involved in pre-tRNA splicing, probably by affecting the interaction of pre-tRNA with splicing endonuclease. The polypeptide is Exportin-T (LOS1) (Yarrowia lipolytica (strain CLIB 122 / E 150) (Yeast)).